Here is a 263-residue protein sequence, read N- to C-terminus: Phosphatidylglycerol--prolipoprotein diacylglyceryl transferase (263 aa).

3 helical membrane-spanning segments follow: residues 17–37 (LSVR…IFLG), 56–76 (LLFY…VLFY), and 88–108 (IFAV…VLVA). Arg-139 lines the a 1,2-diacyl-sn-glycero-3-phospho-(1'-sn-glycerol) pocket. 2 helical membrane passes run 176–196 (QLYH…WFTA) and 236–256 (ISMG…MVVF).

The protein belongs to the Lgt family.

The protein resides in the cell inner membrane. The catalysed reaction is L-cysteinyl-[prolipoprotein] + a 1,2-diacyl-sn-glycero-3-phospho-(1'-sn-glycerol) = an S-1,2-diacyl-sn-glyceryl-L-cysteinyl-[prolipoprotein] + sn-glycerol 1-phosphate + H(+). It functions in the pathway protein modification; lipoprotein biosynthesis (diacylglyceryl transfer). In terms of biological role, catalyzes the transfer of the diacylglyceryl group from phosphatidylglycerol to the sulfhydryl group of the N-terminal cysteine of a prolipoprotein, the first step in the formation of mature lipoproteins. The polypeptide is Phosphatidylglycerol--prolipoprotein diacylglyceryl transferase (Dechloromonas aromatica (strain RCB)).